The following is a 285-amino-acid chain: UPF0014 membrane protein STAR2 (285 aa).

7 helical membrane-spanning segments follow: residues 30 to 50 (FLVGMLKPVAATAVVAMAVAL), 64 to 84 (YAMARAFLQLSVIGFVLQFIF), 88 to 108 (SAAWILLAYLFMVTVAGYTAG), 119 to 139 (HIAAVSILAGTSVTMALLVAL), 148 to 168 (YIIPVAGMMVGNAMTVTGVTM), 203 to 225 (SLVIALSPVIDNAKTVGLIALPG), and 240 to 262 (AIQLQIVVMNMLMGASTVSSILS).

Belongs to the UPF0014 family. As to quaternary structure, interacts with STAR2. Expressed in roots.

It localises to the membrane. Associates with STAR2 to form a functional transmembrane ABC transporter required for detoxification of aluminum (Al) in roots. Can specifically transport UDP-glucose. This Oryza sativa subsp. japonica (Rice) protein is UPF0014 membrane protein STAR2.